A 692-amino-acid chain; its full sequence is Elongation factor G (692 aa).

The 275-residue stretch at 8-282 (ENTRNIGIMA…AVIDYLPSPL (275 aa)) folds into the tr-type G domain. GTP is bound by residues 17–24 (AHIDAGKT), 81–85 (DTPGH), and 135–138 (NKMD).

It belongs to the TRAFAC class translation factor GTPase superfamily. Classic translation factor GTPase family. EF-G/EF-2 subfamily.

It localises to the cytoplasm. In terms of biological role, catalyzes the GTP-dependent ribosomal translocation step during translation elongation. During this step, the ribosome changes from the pre-translocational (PRE) to the post-translocational (POST) state as the newly formed A-site-bound peptidyl-tRNA and P-site-bound deacylated tRNA move to the P and E sites, respectively. Catalyzes the coordinated movement of the two tRNA molecules, the mRNA and conformational changes in the ribosome. This Bacillus cereus (strain ZK / E33L) protein is Elongation factor G.